Here is a 1012-residue protein sequence, read N- to C-terminus: Ankyrin repeat- and BTB/POZ domain-containing protein 3-B (1012 aa).

Residues 160–180 (ILSWTISVNCIAASLSALSMY) form a helical membrane-spanning segment. ANK repeat units follow at residues 511 to 540 (QGMT…DINS), 557 to 586 (RQAT…NVEG), and 595 to 624 (YTET…DPMI). One can recognise a BTB domain in the interval 831 to 897 (SDVTFLVEGK…LYCGGTDALH (67 aa)).

Its subcellular location is the membrane. The polypeptide is Ankyrin repeat- and BTB/POZ domain-containing protein 3-B (abtb3b) (Danio rerio (Zebrafish)).